A 356-amino-acid polypeptide reads, in one-letter code: Phospho-N-acetylmuramoyl-pentapeptide-transferase (356 aa).

A run of 10 helical transmembrane segments spans residues 27–47 (ATLM…INML), 73–93 (TMGG…WMDL), 97–117 (FVWA…LDDL), 138–158 (FLVA…WLYV), 165–185 (AIPL…GAGN), 195–215 (GLAI…AYLA), 232–252 (AGEL…FLWF), 258–278 (AVFM…AIAV), 284–304 (IVLA…IIQV), and 333–353 (KVVI…LATL).

The protein belongs to the glycosyltransferase 4 family. MraY subfamily. Mg(2+) serves as cofactor.

It localises to the cell inner membrane. It catalyses the reaction UDP-N-acetyl-alpha-D-muramoyl-L-alanyl-gamma-D-glutamyl-meso-2,6-diaminopimeloyl-D-alanyl-D-alanine + di-trans,octa-cis-undecaprenyl phosphate = di-trans,octa-cis-undecaprenyl diphospho-N-acetyl-alpha-D-muramoyl-L-alanyl-D-glutamyl-meso-2,6-diaminopimeloyl-D-alanyl-D-alanine + UMP. Its pathway is cell wall biogenesis; peptidoglycan biosynthesis. Functionally, catalyzes the initial step of the lipid cycle reactions in the biosynthesis of the cell wall peptidoglycan: transfers peptidoglycan precursor phospho-MurNAc-pentapeptide from UDP-MurNAc-pentapeptide onto the lipid carrier undecaprenyl phosphate, yielding undecaprenyl-pyrophosphoryl-MurNAc-pentapeptide, known as lipid I. The protein is Phospho-N-acetylmuramoyl-pentapeptide-transferase of Erythrobacter litoralis (strain HTCC2594).